The sequence spans 78 residues: uncharacterized protein (78 aa).

This is an uncharacterized protein from Saccharomyces cerevisiae (strain ATCC 204508 / S288c) (Baker's yeast).